The chain runs to 437 residues: Serine carboxypeptidase-like 9 (437 aa).

The first 21 residues, 1–21 (MSLILKFMLLILLVSSHHVRS), serve as a signal peptide directing secretion. N-linked (GlcNAc...) asparagine glycosylation is present at asparagine 101. The active site involves serine 175. 2 disulfides stabilise this stretch: cysteine 243–cysteine 257 and cysteine 281–cysteine 293. Asparagine 307 and asparagine 346 each carry an N-linked (GlcNAc...) asparagine glycan. Residue aspartate 362 is part of the active site. The N-linked (GlcNAc...) asparagine glycan is linked to asparagine 378. Histidine 415 is an active-site residue.

The protein belongs to the peptidase S10 family. In terms of tissue distribution, expressed in seedlings, leaves, flowers and siliques.

It is found in the secreted. The catalysed reaction is 2 1-O-(trans-sinapoyl)-beta-D-glucose = 1,2-di-O-sinapoyl beta-D-glucose + D-glucose. Functionally, catalyzes the formation of 1,2-bis-O-sinapoyl beta-D-glucoside and an unidentified compound 1. In Arabidopsis thaliana (Mouse-ear cress), this protein is Serine carboxypeptidase-like 9 (SCPL9).